The sequence spans 496 residues: Fibronectin type III and SPRY domain-containing protein 1 (496 aa).

The stretch at 4–99 forms a coiled coil; it reads QREALRKIIT…ALESSEELLE (96 aa). Residues 105-162 enclose the COS domain; that stretch reads LQASDSEDFSQAAKEIKDGITMAPAFRLSLKAKVSDNMSHLMVDFAQERQMLQALKFL. The Fibronectin type-III domain occupies 164–268; sequence VPSAPTIDLA…EPVTLETPAF (105 aa). Positions 290–477 constitute a B30.2/SPRY domain; that stretch reads WDAMGGKVQD…VTTGLQVPSA (188 aa). The tract at residues 301-336 is disordered; sequence KAREKEGKGRTASPVNSPARGTPSPKRMSSGRGGRD. Residues Arg310 and Arg320 each carry the omega-N-methylarginine modification.

In terms of assembly, oligomerization is required for binding to microtubules.

It localises to the cytoplasm. The protein localises to the cytoskeleton. It is found in the microtubule organizing center. The protein resides in the centrosome. Its subcellular location is the nucleus. It localises to the cleavage furrow. May be involved in microtubule organization and stabilization. This is Fibronectin type III and SPRY domain-containing protein 1 (Fsd1) from Mus musculus (Mouse).